The following is a 950-amino-acid chain: Sodium/calcium exchanger Calx (950 aa).

Residues 1–22 (MQLLLKSIFTCALFVIFVYATA) form the signal peptide. At 23–120 (QSLLKVQETE…PQRNISVGDR (98 aa)) the chain is on the extracellular side. 3 N-linked (GlcNAc...) asparagine glycosylation sites follow: asparagine 39, asparagine 47, and asparagine 114. A helical transmembrane segment spans residues 121-141 (LVRGFVYFVLLIYLFVGVSII). The Cytoplasmic segment spans residues 142–179 (ADRFMAAIEAITSIERAVVVKGPNNTKQVMHVRIWNET). The chain crosses the membrane as a helical span at residues 180 to 200 (VANLTLMALGSSAPEILLSVI). The Extracellular portion of the chain corresponds to 201-216 (EIYAKDFESGDLGPGT). The helical transmembrane segment at 217-237 (IVGSAAYNLFMIIAVCMIWIP) threads the bilayer. Topologically, residues 238 to 257 (AGEVRRIRHLRVFFVTALFS) are cytoplasmic. Transmembrane regions (helical) follow at residues 258 to 278 (VFAYVWLWLILSVFTPGVILV) and 279 to 299 (WEAIVTLLFFPLTVLWAYIAE). Residues 300–749 (RRLLVYKYMD…NDDEEEEVPS (450 aa)) lie on the Cytoplasmic side of the membrane. The interval 301-318 (RLLVYKYMDKNYRVNKRG) is corresponds to the exchanger inhibitory peptide (XIP) found in other sodium/calcium exchange proteins and thought to be involved in calmodulin binding. In terms of domain architecture, Calx-beta 1 spans 440–551 (DPIRMYFEPG…MIATVMILDD (112 aa)). Ca(2+)-binding residues include glutamate 455, aspartate 490, aspartate 515, aspartate 516, valine 518, glutamate 520, glutamate 523, aspartate 550, aspartate 551, and aspartate 552. One can recognise a Calx-beta 2 domain in the interval 555–694 (GIFAFTDSVF…LTTAYVRIRE (140 aa)). The chain crosses the membrane as a helical span at residues 750-770 (CFSYVSHFVCLFWKVLFAFVP). At 771-775 (PTDIC) the chain is on the extracellular side. Residues 776-796 (GGYVTFVVSIFVIGVITAIIG) form a helical membrane-spanning segment. The Cytoplasmic portion of the chain corresponds to 797–813 (DAASYFGCALNIKDSVT). The helical transmembrane segment at 814–834 (AILFVALGTSIPDTFASMIAA) threads the bilayer. Over 835–848 (KHDEGADNCIGNVT) the chain is Extracellular. A glycan (N-linked (GlcNAc...) asparagine) is linked at asparagine 846. Residues 849-869 (GSNAVNVFLGIGLAWTIAAVY) form a helical membrane-spanning segment. Residues 870–883 (HSSHGMTFNVEPGT) lie on the Cytoplasmic side of the membrane. Residues 884 to 904 (IGFAVALFCGEALIAIMLIMF) form a helical membrane-spanning segment. Topologically, residues 905–923 (RRWHKGIGAELGGPKVSKY) are extracellular. A helical transmembrane segment spans residues 924 to 944 (ISAAILVFLWVFYVVICILEA). The Cytoplasmic segment spans residues 945–950 (YDVIRV).

It belongs to the Ca(2+):cation antiporter (CaCA) (TC 2.A.19) family. SLC8 subfamily. In terms of tissue distribution, ubiquitously expressed with higher expression in head compared to body (at protein level). Enriched in photoreceptor cells of the eye (at protein level). In the adult head, expressed in retina, optic ganglia and all neuronal tissues.

It localises to the cell membrane. Its subcellular location is the cell projection. The protein resides in the rhabdomere membrane. The enzyme catalyses Ca(2+)(in) + 3 Na(+)(out) = Ca(2+)(out) + 3 Na(+)(in). Activated by a Na(+) electrochemical gradient but also undergoes Na(2+)-dependent inactivation. Inhibited by micromolar levels of cytoplasmic Ca(2+), which is the opposite of most characterized mammalian homologs. Its activity is regulated as follows. Exhibits greater extent of inhibition by Ca(2+) than isoform D/1.2. With respect to regulation, exhibits greater Na(2+)-dependent inactivation than isoform A/1.1, probably due to greater stability of the inactive Na(2+)-bound form. In terms of biological role, na(+)/Ca(2+) antiporter that couples the energy of a Na(+) electrochemical gradient to the movement of Ca(2+) against an electrochemical gradient across a membrane, which contributes to the regulation of cytoplasmic Ca(2+) levels. Mediates Na(+)/Ca(2+) exchange in photoreceptor cells and involved in controlling Ca(2+) levels during phototransduction, affecting magnitude of the photoresponse, activation kinetics, signal amplification, response termination, and light adaptation. Light induced depolarization of photoreceptor cells, resulting in Na(+) and Ca(2+) entry through trp/transient receptor potential protein channels, is essential for photoreceptor cell function but may result in toxic levels of cytoplasmic Ca(2+). Na(+)/Ca(2+) antiporter regulation of Ca(2+) levels protects photoreceptor cells from light-dependent retinal degeneration. This chain is Sodium/calcium exchanger Calx, found in Drosophila melanogaster (Fruit fly).